A 168-amino-acid chain; its full sequence is HTH-type transcriptional regulator IscR (168 aa).

In terms of domain architecture, HTH rrf2-type spans 2-131 (KLTSKGRYAV…DGISLGELMV (130 aa)). The H-T-H motif DNA-binding region spans 28–51 (LADISERQGISLSYLEQLFSKLRK). [2Fe-2S] cluster contacts are provided by Cys-92, Cys-98, and Cys-104.

[2Fe-2S] cluster serves as cofactor.

Its function is as follows. Regulates the transcription of several operons and genes involved in the biogenesis of Fe-S clusters and Fe-S-containing proteins. This chain is HTH-type transcriptional regulator IscR, found in Aliivibrio salmonicida (strain LFI1238) (Vibrio salmonicida (strain LFI1238)).